A 670-amino-acid polypeptide reads, in one-letter code: Protein angel homolog 1 (670 aa).

Phosphoserine occurs at positions 77 and 105.

Belongs to the CCR4/nocturin family.

The chain is Protein angel homolog 1 (ANGEL1) from Homo sapiens (Human).